The sequence spans 407 residues: Argininosuccinate synthase (407 aa).

ATP contacts are provided by residues 16-24 and Ala44; that span reads AYSGGLDTS. Residues Tyr96 and Ser101 each coordinate L-citrulline. Gly126 is an ATP binding site. The L-aspartate site is built by Thr128, Asn132, and Asp133. Asn132 contributes to the L-citrulline binding site. The L-citrulline site is built by Arg136, Ser185, Ser194, Glu270, and Tyr282.

The protein belongs to the argininosuccinate synthase family. Type 1 subfamily. As to quaternary structure, homotetramer.

The protein resides in the cytoplasm. It catalyses the reaction L-citrulline + L-aspartate + ATP = 2-(N(omega)-L-arginino)succinate + AMP + diphosphate + H(+). It participates in amino-acid biosynthesis; L-arginine biosynthesis; L-arginine from L-ornithine and carbamoyl phosphate: step 2/3. The polypeptide is Argininosuccinate synthase (Shewanella loihica (strain ATCC BAA-1088 / PV-4)).